The following is a 122-amino-acid chain: Flowering-promoting factor 1-like protein 3 (122 aa).

The disordered stretch occupies residues 16 to 36 (ENPGSEESSSAGDGGGGGRRK).

Belongs to the FPF1 family.

This chain is Flowering-promoting factor 1-like protein 3, found in Oryza sativa subsp. japonica (Rice).